Reading from the N-terminus, the 715-residue chain is Palmitoyltransferase ZDHHC5 (715 aa).

At 1–13 (MPAESGKRFKPSK) the chain is on the cytoplasmic side. Residues 14 to 34 (YVPVSAAAIFLVGATTLFFAF) form a helical membrane-spanning segment. Residues 35–38 (TCPG) are Extracellular-facing. The chain crosses the membrane as a helical span at residues 39-59 (LSLCVSPAVPIYNAIVFLFVL). The Cytoplasmic segment spans residues 60-148 (ANFSMATFMD…NCIGRRNYRY (89 aa)). Tyr91 carries the phosphotyrosine modification. The region spanning 104–154 (KWCATCRFYRPPRCSHCSVCDNCVEEFDHHCPWVNNCIGRRNYRYFFLFLL) is the DHHC domain. Catalysis depends on Cys134, which acts as the S-palmitoyl cysteine intermediate. Residues 149-169 (FFLFLLSLTAHIMGVFGFGLL) traverse the membrane as a helical segment. The Extracellular segment spans residues 170–191 (YVLYHMEELSGVRTAVTMAVMC). Residues 192 to 212 (VAGLFFIPVAGLTGFHVVLVA) form a helical membrane-spanning segment. Topologically, residues 213–715 (RGRTTNEQVT…VGGTTYEISV (503 aa)) are cytoplasmic. Phosphoserine is present on residues Ser247, Ser296, and Ser299. Residues 289–648 (GELRRSKSKG…SQKAPAGVSE (360 aa)) are disordered. At Thr303 the chain carries Phosphothreonine. Ser345 bears the Phosphoserine mark. 2 positions are modified to phosphothreonine: Thr348 and Thr350. Residues 359–373 (SSSSTSAAMPHSSSA) are compositionally biased toward low complexity. Ser380, Ser398, Ser406, and Ser409 each carry phosphoserine. Phosphothreonine is present on Thr411. Phosphoserine occurs at positions 415, 425, 429, and 432. Low complexity predominate over residues 422-432 (SSGSRSSSLKS). Thr436 carries the phosphothreonine modification. The segment covering 442 to 478 (QLQSIRSEGTTSTSYKSLANQTRNGSLSYDSLLTPSD) has biased composition (polar residues). Residues Ser529 and Ser554 each carry the phosphoserine modification. Omega-N-methylarginine is present on Arg617. At Ser621 the chain carries Phosphoserine. The residue at position 659 (Thr659) is a Phosphothreonine. The disordered stretch occupies residues 666–715 (LKTAYSKSNGQPKSIGSASPGPGQQPLSSPTRGGVKKVSGVGGTTYEISV). The span at 668–679 (TAYSKSNGQPKS) shows a compositional bias: polar residues. Positions 681 to 695 (GSASPGPGQQPLSSP) are enriched in low complexity. Phosphoserine occurs at positions 684 and 694. Arg697 carries the omega-N-methylarginine modification.

The protein belongs to the DHHC palmitoyltransferase family. ERF2/ZDHHC9 subfamily. Post-translationally, phosphorylation regulates association with endocytic proteins and its subcellular localization. Phosphorylation by LYN during fatty acid uptake leads to inactivation of the activity. In terms of processing, autopalmitoylated. Palmitoylation of the C-terminal tail regulates stimulation-dependent plasma membrane motility.

It is found in the cell membrane. The enzyme catalyses L-cysteinyl-[protein] + hexadecanoyl-CoA = S-hexadecanoyl-L-cysteinyl-[protein] + CoA. Palmitoyltransferase that catalyzes the addition of palmitate onto various protein substrates such as CTNND2, CD36, GSDMD, NLRP3, NOD1, NOD2, STAT3 and S1PR1 thus plays a role in various biological processes including cell adhesion, inflammation, fatty acid uptake, bacterial sensing or cardiac functions. Plays an important role in the regulation of synapse efficacy by mediating palmitoylation of delta-catenin/CTNND2, thereby increasing synaptic delivery and surface stabilization of alpha-amino-3-hydroxy-5-methyl-4-isoxazole propionic acid receptors (AMPARs). Under basal conditions, remains at the synaptic membrane through FYN-mediated phosphorylation that prevents association with endocytic proteins. Neuronal activity enhances the internalization and trafficking of DHHC5 from spines to dendritic shafts where it palmitoylates delta-catenin/CTNND2. Regulates cell adhesion at the plasma membrane by palmitoylating GOLGA7B and DSG2. Plays a role in innate immune response by mediating the palmitoylation of NOD1 and NOD2 and their proper recruitment to the bacterial entry site and phagosomes. Also participates in fatty acid uptake by palmitoylating CD36 and thereby targeting it to the plasma membrane. Upon binding of fatty acids to CD36, gets phosphorylated by LYN leading to inactivation and subsequent CD36 caveolar endocytosis. Controls oligodendrocyte development by catalyzing STAT3 palmitoylation. Acts as a regulator of inflammatory response by mediating palmitoylation of NLRP3 and GSDMD. Palmitoylates NLRP3 to promote inflammasome assembly and activation. Activates pyroptosis by catalyzing palmitoylation of gasdermin-D (GSDMD), thereby promoting membrane translocation and pore formation of GSDMD. This chain is Palmitoyltransferase ZDHHC5 (ZDHHC5), found in Canis lupus familiaris (Dog).